A 50-amino-acid polypeptide reads, in one-letter code: Tubulin alpha chain (50 aa).

N28 contributes to the GTP binding site. Residue E40 is part of the active site.

This sequence belongs to the tubulin family. As to quaternary structure, dimer of alpha and beta chains. A typical microtubule is a hollow water-filled tube with an outer diameter of 25 nm and an inner diameter of 15 nM. Alpha-beta heterodimers associate head-to-tail to form protofilaments running lengthwise along the microtubule wall with the beta-tubulin subunit facing the microtubule plus end conferring a structural polarity. Microtubules usually have 13 protofilaments but different protofilament numbers can be found in some organisms and specialized cells. The cofactor is Mg(2+).

The protein localises to the cytoplasm. It localises to the cytoskeleton. The catalysed reaction is GTP + H2O = GDP + phosphate + H(+). Functionally, tubulin is the major constituent of microtubules, a cylinder consisting of laterally associated linear protofilaments composed of alpha- and beta-tubulin heterodimers. Microtubules grow by the addition of GTP-tubulin dimers to the microtubule end, where a stabilizing cap forms. Below the cap, tubulin dimers are in GDP-bound state, owing to GTPase activity of alpha-tubulin. This chain is Tubulin alpha chain, found in Populus euphratica (Euphrates poplar).